A 292-amino-acid chain; its full sequence is 4-hydroxy-tetrahydrodipicolinate synthase (292 aa).

Thr45 serves as a coordination point for pyruvate. Catalysis depends on Tyr133, which acts as the Proton donor/acceptor. Lys161 (schiff-base intermediate with substrate) is an active-site residue. A pyruvate-binding site is contributed by Ile203.

This sequence belongs to the DapA family. In terms of assembly, homotetramer; dimer of dimers.

Its subcellular location is the cytoplasm. The catalysed reaction is L-aspartate 4-semialdehyde + pyruvate = (2S,4S)-4-hydroxy-2,3,4,5-tetrahydrodipicolinate + H2O + H(+). Its pathway is amino-acid biosynthesis; L-lysine biosynthesis via DAP pathway; (S)-tetrahydrodipicolinate from L-aspartate: step 3/4. Functionally, catalyzes the condensation of (S)-aspartate-beta-semialdehyde [(S)-ASA] and pyruvate to 4-hydroxy-tetrahydrodipicolinate (HTPA). This chain is 4-hydroxy-tetrahydrodipicolinate synthase, found in Escherichia fergusonii (strain ATCC 35469 / DSM 13698 / CCUG 18766 / IAM 14443 / JCM 21226 / LMG 7866 / NBRC 102419 / NCTC 12128 / CDC 0568-73).